Here is a 295-residue protein sequence, read N- to C-terminus: Iron-sulfur cluster carrier protein (295 aa).

Residue 38-45 (GKGGVGKS) participates in ATP binding.

It belongs to the Mrp/NBP35 ATP-binding proteins family. In terms of assembly, homodimer.

Its function is as follows. Binds and transfers iron-sulfur (Fe-S) clusters to target apoproteins. Can hydrolyze ATP. The sequence is that of Iron-sulfur cluster carrier protein from Pyrococcus horikoshii (strain ATCC 700860 / DSM 12428 / JCM 9974 / NBRC 100139 / OT-3).